The chain runs to 273 residues: Phycocyanobilin lyase subunit alpha (273 aa).

This sequence belongs to the CpcE/RpcE/PecE family. As to quaternary structure, cpcE and CpcF associate to form a lyase.

Required for the chromophorylation of the cpcA gene product. The protein is Phycocyanobilin lyase subunit alpha (cpcE) of Synechococcus elongatus (strain ATCC 33912 / PCC 7942 / FACHB-805) (Anacystis nidulans R2).